The sequence spans 275 residues: Esterase AAEL000016 (275 aa).

The disordered stretch occupies residues 1–21; sequence MMANETAAKSTKSSPTPAVEP. A compositionally biased stretch (polar residues) spans 7 to 16; sequence AAKSTKSSPT. Residues Ser129, Asp187, and His214 each act as charge relay system in the active site. A disordered region spans residues 253–275; it reads LVDDSGPAGNGVHDDDDDDDDSD. Residues 266-275 show a composition bias toward acidic residues; the sequence is DDDDDDDDSD.

This sequence belongs to the LovG family.

In Aedes aegypti (Yellowfever mosquito), this protein is Esterase AAEL000016.